The chain runs to 1215 residues: Chromosome segregation protein sudA (1215 aa).

An ATP-binding site is contributed by 32 to 39 (GRNGSGKS). A coiled-coil region spans residues 177–522 (KIMHETNSKR…LSQMMDHNTS (346 aa)). Positions 313 to 332 (SDNQAAAQESKARHDESLKA) are disordered. Residues 538-650 (EGVYGTLAEL…PNLQVASQYA (113 aa)) enclose the SMC hinge domain. The segment at 654-676 (GVNATTPEGDRSDKRGALTGGFH) is disordered. Positions 684–1091 (DAVKNLAKWR…EEAKHSVENY (408 aa)) form a coiled coil.

The protein belongs to the SMC family. SMC3 subfamily.

The protein resides in the nucleus. Involved in chromosome segregation in mitosis. The polypeptide is Chromosome segregation protein sudA (sudA) (Emericella nidulans (strain FGSC A4 / ATCC 38163 / CBS 112.46 / NRRL 194 / M139) (Aspergillus nidulans)).